The chain runs to 498 residues: Flavin-dependent halogenase otaD (498 aa).

FAD is bound by residues Gly-14, Gly-17, and Glu-47. Residues Ser-326 and Gly-327 each coordinate chloride. An FAD-binding site is contributed by Val-328.

This sequence belongs to the flavin-dependent halogenase family.

The enzyme catalyses ochratoxin B + FADH2 + chloride + O2 = ochratoxin A + FAD + 2 H2O. Its pathway is mycotoxin biosynthesis. Its function is as follows. Flavin-dependent halogenase; part of the gene cluster that mediates the biosynthesis of ochratoxin A (OTA), a mycotoxin composed of a chlorinated type I polyketide dihydroisocoumarin moiety linked to L-phenylalanine, and demonstrated to have nephrotoxic, immunotoxic, genotoxic, neurotoxic, and teratogenic properties. OtaD chlorinates ochratoxin B (OTB) at the C-5 position to form OTA. The pathway begins with the highly reducing polyketide synthase otaA that catalyzes the formation of the isocoumarin group during the initial stages of biosynthesis, starting from one acetate and 4 malonate units, to originate the characteristic pentaketide skeleton 7-methylmellein (7-MM) of the OTA molecule. The newly identified cyclase otaY might be involved in the polyketide cyclization reaction during the initial steps of the OTA biosynthesis. 7-MM is then oxidized into 7-carboxymellein (also called ochratoxin beta) by the cytochrome P450 monooxygenase otaC. The NRPS encoded by the otaB gene is involved in the linking of phenylalanine to the dihydroisocoumarin ring. The reaction catalyzed by NRPS results in the production of ochratoxin B (OTB), which is the non-chlorinated analog of OTA and which subsequently serves as the substrate of the halogenase otaD for chlorination activity to form the final molecular structure of OTA, containing a chlorine atom in the C-5 position of the molecule. This Aspergillus carbonarius (strain ITEM 5010) protein is Flavin-dependent halogenase otaD.